The sequence spans 263 residues: Putative hydro-lyase BPUM_0381 (263 aa).

The protein belongs to the D-glutamate cyclase family.

The chain is Putative hydro-lyase BPUM_0381 from Bacillus pumilus (strain SAFR-032).